A 644-amino-acid polypeptide reads, in one-letter code: Coiled-coil domain-containing protein 22 homolog (644 aa).

The tract at residues 316-341 (DEQKAAAMAGLSESGPPKMDTEEELQ) is disordered. Coiled coils occupy residues 333 to 383 (KMDT…NEQV), 409 to 486 (DAEN…GKDD), and 592 to 644 (GVIM…LKSS).

The protein belongs to the CCDC22 family.

This is Coiled-coil domain-containing protein 22 homolog from Nematostella vectensis (Starlet sea anemone).